Reading from the N-terminus, the 778-residue chain is Endonuclease MutS2 (778 aa).

332–339 is a binding site for ATP; it reads GPNTGGKT. The 76-residue stretch at 703-778 folds into the Smr domain; sequence IDLRGKMVDE…GLGCTVVTLK (76 aa).

The protein belongs to the DNA mismatch repair MutS family. MutS2 subfamily. As to quaternary structure, homodimer. Binds to stalled ribosomes, contacting rRNA.

Its function is as follows. Endonuclease that is involved in the suppression of homologous recombination and thus may have a key role in the control of bacterial genetic diversity. In terms of biological role, acts as a ribosome collision sensor, splitting the ribosome into its 2 subunits. Detects stalled/collided 70S ribosomes which it binds and splits by an ATP-hydrolysis driven conformational change. Acts upstream of the ribosome quality control system (RQC), a ribosome-associated complex that mediates the extraction of incompletely synthesized nascent chains from stalled ribosomes and their subsequent degradation. Probably generates substrates for RQC. The protein is Endonuclease MutS2 of Fusobacterium nucleatum subsp. nucleatum (strain ATCC 25586 / DSM 15643 / BCRC 10681 / CIP 101130 / JCM 8532 / KCTC 2640 / LMG 13131 / VPI 4355).